A 70-amino-acid polypeptide reads, in one-letter code: Cytochrome c oxidase subunit 8B, mitochondrial (70 aa).

The N-terminal 24 residues, 1 to 24 (MLRLAPTVRLLQAPLRGWAVPKAH), are a transit peptide targeting the mitochondrion. Topologically, residues 25–35 (ITAKPAKTPTS) are mitochondrial matrix. The helical transmembrane segment at 36-59 (PKEQAIGLSVTFLSFLLPAGWVLY) threads the bilayer. The Mitochondrial intermembrane segment spans residues 60–70 (HLDNYKKSSAA).

This sequence belongs to the cytochrome c oxidase VIII family. In terms of assembly, component of the cytochrome c oxidase (complex IV, CIV), a multisubunit enzyme composed of 14 subunits. The complex is composed of a catalytic core of 3 subunits MT-CO1, MT-CO2 and MT-CO3, encoded in the mitochondrial DNA, and 11 supernumerary subunits COX4I1 (or COX4I2), COX5A, COX5B, COX6A2 (or COX6A1), COX6B1 (or COX6B2), COX6C, COX7A1 (or COX7A2), COX7B, COX7C, COX8B and NDUFA4, which are encoded in the nuclear genome. The complex exists as a monomer or a dimer and forms supercomplexes (SCs) in the inner mitochondrial membrane with NADH-ubiquinone oxidoreductase (complex I, CI) and ubiquinol-cytochrome c oxidoreductase (cytochrome b-c1 complex, complex III, CIII), resulting in different assemblies (supercomplex SCI(1)III(2)IV(1) and megacomplex MCI(2)III(2)IV(2)).

Its subcellular location is the mitochondrion inner membrane. It functions in the pathway energy metabolism; oxidative phosphorylation. In terms of biological role, component of the cytochrome c oxidase, the last enzyme in the mitochondrial electron transport chain which drives oxidative phosphorylation. The respiratory chain contains 3 multisubunit complexes succinate dehydrogenase (complex II, CII), ubiquinol-cytochrome c oxidoreductase (cytochrome b-c1 complex, complex III, CIII) and cytochrome c oxidase (complex IV, CIV), that cooperate to transfer electrons derived from NADH and succinate to molecular oxygen, creating an electrochemical gradient over the inner membrane that drives transmembrane transport and the ATP synthase. Cytochrome c oxidase is the component of the respiratory chain that catalyzes the reduction of oxygen to water. Electrons originating from reduced cytochrome c in the intermembrane space (IMS) are transferred via the dinuclear copper A center (CU(A)) of subunit 2 and heme A of subunit 1 to the active site in subunit 1, a binuclear center (BNC) formed by heme A3 and copper B (CU(B)). The BNC reduces molecular oxygen to 2 water molecules using 4 electrons from cytochrome c in the IMS and 4 protons from the mitochondrial matrix. The polypeptide is Cytochrome c oxidase subunit 8B, mitochondrial (COX8B) (Bos taurus (Bovine)).